Consider the following 68-residue polypeptide: Agnoprotein (68 aa).

Residues 1 to 24 lie on the Cytoplasmic side of the membrane; it reads MVLRQLSRQASVKVGKTWTGTKRR. 2 positions are modified to phosphoserine; by host: serine 7 and serine 11. At threonine 21 the chain carries Phosphothreonine; by host. A helical; Signal-anchor for type II membrane protein membrane pass occupies residues 25–41; that stretch reads AQRIFIFILELLLDFCR. Topologically, residues 42 to 68 are extracellular; it reads GEDSVDGKKKKDSLTDKTETVTEKKES. A disordered region spans residues 44–68; the sequence is DSVDGKKKKDSLTDKTETVTEKKES.

The protein belongs to the polyomavirus agnoprotein family. As to quaternary structure, homooligomer. Interacts with VP1. Interacts with large T antigen; this interaction may impact upon the activity of T-antigen on the control of viral gene transcription and replication. Interacts with small t antigen. Interacts with host CBX5; this interaction induces the dissociation of CBX5 from LBR, resulting in destabilization of the nuclear envelope. Phosphorylated by host PKC. Phosphorylation alters the stability and may also have an impact on the subcellular location.

The protein resides in the host cytoplasm. The protein localises to the host nucleus membrane. It localises to the host rough endoplasmic reticulum membrane. Its subcellular location is the host cell membrane. In terms of biological role, alters the structure of the nuclear envelope by interacting with host CBX5 and disrupting CBX5 association with LBR. Involved in the perinuclear-nuclear localization of the capsid protein VP1 during virion assembly and maturation. Plays an important role in the release of progeny virions from infected cells and in viral propagation, probably by acting as a viral ionic channel in the host plasma membrane. Allows influx of extracellular calcium ions in the host cell. May contribute to viral genome transcription and translation of viral late proteins. The sequence is that of Agnoprotein from Simian virus 12 (strain wt100) (SV-12).